The sequence spans 363 residues: S-adenosylmethionine:tRNA ribosyltransferase-isomerase (363 aa).

Belongs to the QueA family. Monomer.

It is found in the cytoplasm. It catalyses the reaction 7-aminomethyl-7-carbaguanosine(34) in tRNA + S-adenosyl-L-methionine = epoxyqueuosine(34) in tRNA + adenine + L-methionine + 2 H(+). It participates in tRNA modification; tRNA-queuosine biosynthesis. Transfers and isomerizes the ribose moiety from AdoMet to the 7-aminomethyl group of 7-deazaguanine (preQ1-tRNA) to give epoxyqueuosine (oQ-tRNA). This Haemophilus influenzae (strain 86-028NP) protein is S-adenosylmethionine:tRNA ribosyltransferase-isomerase.